Reading from the N-terminus, the 186-residue chain is UPF0461 protein C5orf24 homolog (186 aa).

Residues 60–69 (NETHLQTSTS) show a composition bias toward polar residues. Residues 60-140 (NETHLQTSTS…AAGYKVSPGR (81 aa)) form a disordered region. The span at 78-92 (LKKKKNLGRSGKRGR) shows a compositional bias: basic residues. Residues 94–107 (SGTTKSAGYRTSTG) show a composition bias toward polar residues.

This sequence belongs to the UPF0461 family.

The sequence is that of UPF0461 protein C5orf24 homolog from Xenopus tropicalis (Western clawed frog).